A 298-amino-acid polypeptide reads, in one-letter code: Urease accessory protein UreD (298 aa).

The protein belongs to the UreD family. UreD, UreF and UreG form a complex that acts as a GTP-hydrolysis-dependent molecular chaperone, activating the urease apoprotein by helping to assemble the nickel containing metallocenter of UreC. The UreE protein probably delivers the nickel.

It is found in the cytoplasm. Required for maturation of urease via the functional incorporation of the urease nickel metallocenter. In Marinobacter nauticus (strain ATCC 700491 / DSM 11845 / VT8) (Marinobacter aquaeolei), this protein is Urease accessory protein UreD.